The primary structure comprises 329 residues: Ferredoxin--NADP reductase 2 (329 aa).

Positions 18, 37, 45, 50, 90, 124, 285, and 326 each coordinate FAD.

It belongs to the ferredoxin--NADP reductase type 2 family. In terms of assembly, homodimer. The cofactor is FAD.

The enzyme catalyses 2 reduced [2Fe-2S]-[ferredoxin] + NADP(+) + H(+) = 2 oxidized [2Fe-2S]-[ferredoxin] + NADPH. The polypeptide is Ferredoxin--NADP reductase 2 (Bacillus mycoides (strain KBAB4) (Bacillus weihenstephanensis)).